Here is a 210-residue protein sequence, read N- to C-terminus: Large ribosomal subunit protein uL3 (210 aa).

Residues 131–165 are disordered; sequence GPMSHGSKYHRRVGSMGATTDPGRTFKGKKMPGRM.

The protein belongs to the universal ribosomal protein uL3 family. Part of the 50S ribosomal subunit. Forms a cluster with proteins L14 and L19.

Functionally, one of the primary rRNA binding proteins, it binds directly near the 3'-end of the 23S rRNA, where it nucleates assembly of the 50S subunit. This Caldanaerobacter subterraneus subsp. tengcongensis (strain DSM 15242 / JCM 11007 / NBRC 100824 / MB4) (Thermoanaerobacter tengcongensis) protein is Large ribosomal subunit protein uL3.